The primary structure comprises 190 residues: Protein A52 (190 aa).

It belongs to the orthopoxvirus A52R protein family. As to quaternary structure, interacts with host TRAF6 and IRAK2.

Functionally, bcl-2-like protein which targets host toll-like receptor signaling complexes to suppress innate immune response. Interacts with host TRAF6 to activate p38 and subsequently induce the expression of several cytokines such as IL-10. Also associates with host IRAK2 to inhibit NF-kappa-B signaling. In Homo sapiens (Human), this protein is Protein A52.